A 450-amino-acid polypeptide reads, in one-letter code: UDP-N-acetylmuramoylalanine--D-glutamate ligase (450 aa).

ATP is bound at residue 119–125 (GSNGKTT).

It belongs to the MurCDEF family.

The protein localises to the cytoplasm. It carries out the reaction UDP-N-acetyl-alpha-D-muramoyl-L-alanine + D-glutamate + ATP = UDP-N-acetyl-alpha-D-muramoyl-L-alanyl-D-glutamate + ADP + phosphate + H(+). Its pathway is cell wall biogenesis; peptidoglycan biosynthesis. Its function is as follows. Cell wall formation. Catalyzes the addition of glutamate to the nucleotide precursor UDP-N-acetylmuramoyl-L-alanine (UMA). The protein is UDP-N-acetylmuramoylalanine--D-glutamate ligase of Streptococcus pneumoniae (strain Taiwan19F-14).